The primary structure comprises 111 residues: MKKRNISLKSKIEIQKIFKEGNLIRFSNLNLKMFCKSNHLIYSRLLVTFSKSFRGSVKRNRVRRLFKEAFRKRLELLEGRAIDIIFVVYYDRLDLTYFSIESLMKSLVLMV.

This sequence belongs to the RnpA family. In terms of assembly, consists of a catalytic RNA component (M1 or rnpB) and a protein subunit.

The catalysed reaction is Endonucleolytic cleavage of RNA, removing 5'-extranucleotides from tRNA precursor.. In terms of biological role, RNaseP catalyzes the removal of the 5'-leader sequence from pre-tRNA to produce the mature 5'-terminus. It can also cleave other RNA substrates such as 4.5S RNA. The protein component plays an auxiliary but essential role in vivo by binding to the 5'-leader sequence and broadening the substrate specificity of the ribozyme. The protein is Ribonuclease P protein component of Borreliella afzelii (strain PKo) (Borrelia afzelii).